Reading from the N-terminus, the 385-residue chain is Ribosomal RNA large subunit methyltransferase G (385 aa).

It belongs to the methyltransferase superfamily. RlmG family.

It is found in the cytoplasm. The enzyme catalyses guanosine(1835) in 23S rRNA + S-adenosyl-L-methionine = N(2)-methylguanosine(1835) in 23S rRNA + S-adenosyl-L-homocysteine + H(+). In terms of biological role, specifically methylates the guanine in position 1835 (m2G1835) of 23S rRNA. The polypeptide is Ribosomal RNA large subunit methyltransferase G (Vibrio parahaemolyticus serotype O3:K6 (strain RIMD 2210633)).